The following is a 107-amino-acid chain: Cell cycle protein GpsB (107 aa).

The stretch at 32–65 (LDNVIQDYETYISEIEELKAEIERLKNQNTHPKS) forms a coiled coil. Residues 57–80 (KNQNTHPKSPSTENRHAMVQPTRV) form a disordered region. The segment covering 58–68 (NQNTHPKSPST) has biased composition (polar residues).

It belongs to the GpsB family. As to quaternary structure, forms polymers through the coiled coil domains. Interacts with PBP1, MreC and EzrA.

It localises to the cytoplasm. Functionally, divisome component that associates with the complex late in its assembly, after the Z-ring is formed, and is dependent on DivIC and PBP2B for its recruitment to the divisome. Together with EzrA, is a key component of the system that regulates PBP1 localization during cell cycle progression. Its main role could be the removal of PBP1 from the cell pole after pole maturation is completed. Also contributes to the recruitment of PBP1 to the division complex. Not essential for septum formation. The sequence is that of Cell cycle protein GpsB from Streptococcus uberis (strain ATCC BAA-854 / 0140J).